Reading from the N-terminus, the 208-residue chain is Outer-membrane lipoprotein carrier protein (208 aa).

Residues 1-21 (MKKLNTLLLVLGSLVATPSFA) form the signal peptide. The interval 188–208 (KSTFEFTPPEGVEIDDQSNGE) is disordered. The segment covering 199–208 (VEIDDQSNGE) has biased composition (acidic residues).

Belongs to the LolA family. Monomer.

It is found in the periplasm. Its function is as follows. Participates in the translocation of lipoproteins from the inner membrane to the outer membrane. Only forms a complex with a lipoprotein if the residue after the N-terminal Cys is not an aspartate (The Asp acts as a targeting signal to indicate that the lipoprotein should stay in the inner membrane). This is Outer-membrane lipoprotein carrier protein from Pseudoalteromonas translucida (strain TAC 125).